Here is a 204-residue protein sequence, read N- to C-terminus: MATEQEAEVGTETSSVSGRFLRNRDLYLFLPFLLGFSDQESSNGDDDDVASSRERIILVNPFTQGMIVLEGSSGMNPLLRSLLESREEGRPPASKASIDAMPIVEIDGCEGECVICLEEWKSEETVKEMPCKHRFHGGCIEKWLGFHGSCPVCRYEMPVDGDEIGKKRNDGNEIWVRFSFNDGRRIRDFSAQDGGNSDGVESEN.

The RING-type; atypical zinc finger occupies C113–R154.

In terms of processing, autoubiquitinated.

The protein resides in the cytoplasm. It catalyses the reaction S-ubiquitinyl-[E2 ubiquitin-conjugating enzyme]-L-cysteine + [acceptor protein]-L-lysine = [E2 ubiquitin-conjugating enzyme]-L-cysteine + N(6)-ubiquitinyl-[acceptor protein]-L-lysine.. Functionally, E3 ubiquitin-protein ligase involved in protein quality control (PQC) under proteotoxic stress. Is essential to plant survival under proteotoxic stress. Functions by removing damaged proteins before they form cytotoxic aggregates. Recognizes misfolded proteins selectively and tethers polyubiquitin chains to the proteins directly for subsequent degradation by the 26S proteasome pathway. Targets misfolded proteins independently of cytoplasmic chaperones. Associates with the 26S proteasome and sustains the structural integrity of the proteasome complex at the initial stage of proteotoxic stress. Under normal conditions, MPSR1 becomes highly unstable by its autoubiquitination activity and is stabilized during proteotoxic stress by conjugating ubiquitins on misfolded proteins. The protein is E3 ubiquitin-protein ligase MPSR1 of Arabidopsis thaliana (Mouse-ear cress).